The following is a 147-amino-acid chain: MKDIVSQVKDIAQKICEEFHLELFDVKYYNKSGRWFLEIIIDNPYDYISTKDCENVSRKLEFELDKINIIPNKYYLTVSSPGLNRPLRNVKDFERFTGKKAKIKTRENTYIGYIKNVVDNIITFETDGKFIEFKFEEIKKANLEIDI.

This sequence belongs to the RimP family.

It is found in the cytoplasm. Its function is as follows. Required for maturation of 30S ribosomal subunits. The chain is Ribosome maturation factor RimP from Thermosipho melanesiensis (strain DSM 12029 / CIP 104789 / BI429).